Here is a 902-residue protein sequence, read N- to C-terminus: Protein translocase subunit SecA (902 aa).

ATP-binding positions include glutamine 87, glycine 105 to threonine 109, and aspartate 512. Residues arginine 850–glycine 902 form a disordered region. Over residues lysine 853 to serine 868 the composition is skewed to polar residues. The Zn(2+) site is built by cysteine 886, cysteine 888, cysteine 897, and histidine 898. Residues lysine 892–glycine 902 show a composition bias toward basic residues.

The protein belongs to the SecA family. As to quaternary structure, monomer and homodimer. Part of the essential Sec protein translocation apparatus which comprises SecA, SecYEG and auxiliary proteins SecDF-YajC and YidC. Zn(2+) serves as cofactor.

The protein resides in the cell inner membrane. It localises to the cytoplasm. The catalysed reaction is ATP + H2O + cellular proteinSide 1 = ADP + phosphate + cellular proteinSide 2.. In terms of biological role, part of the Sec protein translocase complex. Interacts with the SecYEG preprotein conducting channel. Has a central role in coupling the hydrolysis of ATP to the transfer of proteins into and across the cell membrane, serving both as a receptor for the preprotein-SecB complex and as an ATP-driven molecular motor driving the stepwise translocation of polypeptide chains across the membrane. This Proteus mirabilis (strain HI4320) protein is Protein translocase subunit SecA.